The primary structure comprises 402 residues: Flavohemoprotein (402 aa).

The 136-residue stretch at 1 to 136 folds into the Globin domain; sequence MLSEKTIEIV…IADAFISIEA (136 aa). His85 contacts heme b. Active-site charge relay system residues include Tyr95 and Glu135. The tract at residues 147–402 is reductase; the sequence is GGWKDFRNFV…EFFGPAASLQ (256 aa). The region spanning 150–260 is the FAD-binding FR-type domain; that stretch reads KDFRNFVVVK…SAPAGDFVLN (111 aa). FAD contacts are provided by residues Tyr188 and 204-207; that span reads RQYS. 273–278 provides a ligand contact to NADP(+); the sequence is GVGITP. 394 to 397 contributes to the FAD binding site; that stretch reads FFGP.

It belongs to the globin family. Two-domain flavohemoproteins subfamily. This sequence in the C-terminal section; belongs to the flavoprotein pyridine nucleotide cytochrome reductase family. Heme b is required as a cofactor. The cofactor is FAD.

The enzyme catalyses 2 nitric oxide + NADPH + 2 O2 = 2 nitrate + NADP(+) + H(+). The catalysed reaction is 2 nitric oxide + NADH + 2 O2 = 2 nitrate + NAD(+) + H(+). Its function is as follows. Is involved in NO detoxification in an aerobic process, termed nitric oxide dioxygenase (NOD) reaction that utilizes O(2) and NAD(P)H to convert NO to nitrate, which protects the bacterium from various noxious nitrogen compounds. Therefore, plays a central role in the inducible response to nitrosative stress. This chain is Flavohemoprotein, found in Bacillus anthracis.